The sequence spans 113 residues: Immunoglobulin lambda variable 2-23 (113 aa).

The signal sequence occupies residues 1-19; it reads MAWALLLLTLLTQDTGSWA. At glutamine 20 the chain carries Pyrrolidone carboxylic acid. The segment at 20-44 is framework-1; that stretch reads QSALTQPASVSGSPGQSITISCTGT. One can recognise an Ig-like domain in the interval 20–113; that stretch reads QSALTQPASV…EADYYCCSYA (94 aa). Cysteine 41 and cysteine 109 are oxidised to a cystine. Positions 45–53 are complementarity-determining-1; that stretch reads SSDVGSYNL. A framework-2 region spans residues 54–70; that stretch reads VSWYQQHPGKAPKLMIY. The tract at residues 71–73 is complementarity-determining-2; it reads EGS. Positions 73–92 are disordered; that stretch reads SKRPSGVSNRFSGSKSGNTA. Residues 74–109 form a framework-3 region; it reads KRPSGVSNRFSGSKSGNTASLTISGLQAEDEADYYC. Residues 78-92 are compositionally biased toward polar residues; sequence GVSNRFSGSKSGNTA. Residues 110–113 are complementarity-determining-3; that stretch reads CSYA.

As to quaternary structure, immunoglobulins are composed of two identical heavy chains and two identical light chains; disulfide-linked.

The protein resides in the secreted. Its subcellular location is the cell membrane. Its function is as follows. V region of the variable domain of immunoglobulin light chains that participates in the antigen recognition. Immunoglobulins, also known as antibodies, are membrane-bound or secreted glycoproteins produced by B lymphocytes. In the recognition phase of humoral immunity, the membrane-bound immunoglobulins serve as receptors which, upon binding of a specific antigen, trigger the clonal expansion and differentiation of B lymphocytes into immunoglobulins-secreting plasma cells. Secreted immunoglobulins mediate the effector phase of humoral immunity, which results in the elimination of bound antigens. The antigen binding site is formed by the variable domain of one heavy chain, together with that of its associated light chain. Thus, each immunoglobulin has two antigen binding sites with remarkable affinity for a particular antigen. The variable domains are assembled by a process called V-(D)-J rearrangement and can then be subjected to somatic hypermutations which, after exposure to antigen and selection, allow affinity maturation for a particular antigen. The chain is Immunoglobulin lambda variable 2-23 from Homo sapiens (Human).